A 142-amino-acid polypeptide reads, in one-letter code: Large ribosomal subunit protein uL11 (142 aa).

Belongs to the universal ribosomal protein uL11 family. As to quaternary structure, part of the ribosomal stalk of the 50S ribosomal subunit. Interacts with L10 and the large rRNA to form the base of the stalk. L10 forms an elongated spine to which L12 dimers bind in a sequential fashion forming a multimeric L10(L12)X complex. One or more lysine residues are methylated.

Forms part of the ribosomal stalk which helps the ribosome interact with GTP-bound translation factors. The polypeptide is Large ribosomal subunit protein uL11 (Mycobacterium sp. (strain JLS)).